The sequence spans 88 residues: Period circadian protein (88 aa).

The disordered stretch occupies residues 23 to 88 (VTNTSIAGTG…VTLTESLLNK (66 aa)). A run of 16 repeats spans residues 30–31 (GT), 33–34 (GT), 35–36 (GT), 37–38 (GT), 39–40 (GT), 41–42 (GT), 43–44 (GT), 45–46 (GT), 47–48 (GT), 49–50 (GT), 51–52 (GT), 53–54 (GT), 55–56 (GT), 57–58 (GT), 59–60 (GT), and 61–62 (GN). The 16 X 2 AA tandem repeats of G-[TN] stretch occupies residues 30–62 (GTGGTGTGTGTGTGTGTGTGTGTGTGTGTGTGN). Gly residues predominate over residues 30-62 (GTGGTGTGTGTGTGTGTGTGTGTGTGTGTGTGN). Over residues 79–88 (VTLTESLLNK) the composition is skewed to polar residues.

In terms of assembly, forms a heterodimer with timeless (TIM); the complex then translocates into the nucleus. Phosphorylated with a circadian rhythmicity, probably by the double-time protein (dbt). Phosphorylation could be implicated in the stability of per monomer and in the formation of heterodimer per-tim.

Its subcellular location is the nucleus. The protein localises to the cytoplasm. The protein resides in the perinuclear region. Its function is as follows. Essential for biological clock functions. Determines the period length of circadian and ultradian rhythms; an increase in PER dosage leads to shortened circadian rhythms and a decrease leads to lengthened circadian rhythms. Essential for the circadian rhythmicity of locomotor activity, eclosion behavior, and for the rhythmic component of the male courtship song that originates in the thoracic nervous system. The biological cycle depends on the rhythmic formation and nuclear localization of the TIM-PER complex. Light induces the degradation of TIM, which promotes elimination of PER. Nuclear activity of the heterodimer coordinatively regulates PER and TIM transcription through a negative feedback loop. Behaves as a negative element in circadian transcriptional loop. Does not appear to bind DNA, suggesting indirect transcriptional inhibition. This is Period circadian protein (per) from Drosophila teissieri (Fruit fly).